A 932-amino-acid polypeptide reads, in one-letter code: PMS1 protein homolog 1 (932 aa).

Residues 465-493 form a disordered region; sequence TQSENGNKDHIDESGENEEEAGLENSSEI. The segment at residues 571-639 is a DNA-binding region (HMG box); that stretch reads IKKPMSASAL…RYNSQMKRAI (69 aa).

This sequence belongs to the DNA mismatch repair MutL/HexB family. Component of the DNA mismatch repair (MMR) complex composed at least of MSH2, MSH3, MSH6, PMS1 and MLH1. The MutL-beta complex is a heterodimer of PMS1 and MLH1. Interacts with MCM9.

Its subcellular location is the nucleus. In terms of biological role, probably involved in the repair of mismatches in DNA. The chain is PMS1 protein homolog 1 (PMS1) from Homo sapiens (Human).